Consider the following 493-residue polypeptide: Transcript termination protein A18 (493 aa).

One can recognise a Helicase ATP-binding domain in the interval 100–256 (MIELKRPLYI…NSIINIAKLS (157 aa)). 113–120 (LACGFGKT) provides a ligand contact to ATP. The short motif at 206–209 (DESH) is the DESH box element.

It belongs to the helicase family. Poxviruses subfamily. Interacts with G2. Might be part of a transcription complex composed at least of G2, A18, and H5.

The protein resides in the virion. DNA helicase which seems to act as a postreplicative transcription termination factor. Involved in ATP-dependent release of nascent RNA. Forms a stable complex with single-stranded DNA, and to a lesser extent RNA. This chain is Transcript termination protein A18, found in Cowpox virus (strain GRI-90 / Grishak) (CPV).